Reading from the N-terminus, the 451-residue chain is Enolase (451 aa).

Residue Gln-163 participates in (2R)-2-phosphoglycerate binding. Glu-205 acts as the Proton donor in catalysis. Residues Asp-258, Glu-308, and Asp-335 each contribute to the Mg(2+) site. (2R)-2-phosphoglycerate contacts are provided by Lys-360, Arg-389, Ser-390, and Lys-411. Lys-360 (proton acceptor) is an active-site residue.

The protein belongs to the enolase family. Mg(2+) serves as cofactor.

The protein localises to the cytoplasm. It localises to the secreted. The protein resides in the cell surface. The catalysed reaction is (2R)-2-phosphoglycerate = phosphoenolpyruvate + H2O. The protein operates within carbohydrate degradation; glycolysis; pyruvate from D-glyceraldehyde 3-phosphate: step 4/5. Catalyzes the reversible conversion of 2-phosphoglycerate (2-PG) into phosphoenolpyruvate (PEP). It is essential for the degradation of carbohydrates via glycolysis. The protein is Enolase of Mycoplasma mycoides subsp. mycoides SC (strain CCUG 32753 / NCTC 10114 / PG1).